The chain runs to 273 residues: Giardin subunit beta (273 aa).

Positions 1 to 19 (MSMFTSTRTLTQTMDKPDD) are nonhelical region. Residues 20-273 (LTRSATETAV…GGLSMVTKHQ (254 aa)) are rod. Coiled-coil stretches lie at residues 123–175 (DTLN…YDQL) and 211–263 (NTKL…SKIQ).

It belongs to the SF-assemblin family. In terms of assembly, interacts with BOP1 (via C-terminal WD repeats).

The protein resides in the cytoplasm. Its subcellular location is the cytoskeleton. Functionally, giardins are involved in parasite attachment to the intestinal mucosa and in the cytoskeletal disassembly and reassembly that marks the transition from infectious trophozoite to transmissible cyst. They may interact with other cytoskeletal proteins such as microtubules in the microribbons or crossbridges, to maintain the integrity of the ventral disk. The sequence is that of Giardin subunit beta from Giardia intestinalis (Giardia lamblia).